We begin with the raw amino-acid sequence, 521 residues long: Cholesterol side-chain cleavage enzyme, mitochondrial (521 aa).

A mitochondrion-targeting transit peptide spans Met1–Gly39. Residue Cys462 participates in heme binding.

It belongs to the cytochrome P450 family. In terms of assembly, interacts with FDX1/adrenodoxin. Heme is required as a cofactor.

Its subcellular location is the mitochondrion inner membrane. The enzyme catalyses 6 reduced [adrenodoxin] + cholesterol + 3 O2 + 6 H(+) = 4-methylpentanal + pregnenolone + 6 oxidized [adrenodoxin] + 4 H2O. The catalysed reaction is 2 reduced [adrenodoxin] + cholesterol + O2 + 2 H(+) = (22R)-hydroxycholesterol + 2 oxidized [adrenodoxin] + H2O. It carries out the reaction (22R)-hydroxycholesterol + 2 reduced [adrenodoxin] + O2 + 2 H(+) = (20R,22R)-20,22-dihydroxycholesterol + 2 oxidized [adrenodoxin] + H2O. It catalyses the reaction (20R,22R)-20,22-dihydroxycholesterol + 2 reduced [adrenodoxin] + O2 + 2 H(+) = 4-methylpentanal + pregnenolone + 2 oxidized [adrenodoxin] + 2 H2O. Its pathway is lipid metabolism; C21-steroid hormone metabolism. The protein operates within steroid metabolism; cholesterol metabolism. In terms of biological role, a cytochrome P450 monooxygenase that catalyzes the side-chain hydroxylation and cleavage of cholesterol to pregnenolone, the precursor of most steroid hormones. Catalyzes three sequential oxidation reactions of cholesterol, namely the hydroxylation at C22 followed with the hydroxylation at C20 to yield 20R,22R-hydroxycholesterol that is further cleaved between C20 and C22 to yield the C21-steroid pregnenolone and 4-methylpentanal. Mechanistically, uses molecular oxygen inserting one oxygen atom into a substrate and reducing the second into a water molecule. Two electrons are provided by NADPH via a two-protein mitochondrial transfer system comprising flavoprotein FDXR (adrenodoxin/ferredoxin reductase) and nonheme iron-sulfur protein FDX1 or FDX2 (adrenodoxin/ferredoxin). This chain is Cholesterol side-chain cleavage enzyme, mitochondrial (CYP11A1), found in Macaca fascicularis (Crab-eating macaque).